The chain runs to 305 residues: UDP-N-acetylenolpyruvoylglucosamine reductase 2 (305 aa).

The FAD-binding PCMH-type domain maps to 33 to 197 (VGGKADVFVA…LEARFELEEG (165 aa)). Residue R176 is part of the active site. S226 (proton donor) is an active-site residue. E296 is a catalytic residue.

This sequence belongs to the MurB family. Requires FAD as cofactor.

It localises to the cytoplasm. It catalyses the reaction UDP-N-acetyl-alpha-D-muramate + NADP(+) = UDP-N-acetyl-3-O-(1-carboxyvinyl)-alpha-D-glucosamine + NADPH + H(+). The protein operates within cell wall biogenesis; peptidoglycan biosynthesis. Its function is as follows. Cell wall formation. In Bacillus cereus (strain ZK / E33L), this protein is UDP-N-acetylenolpyruvoylglucosamine reductase 2.